Reading from the N-terminus, the 401-residue chain is Adenylosuccinate synthetase (401 aa).

GTP contacts are provided by residues 12–18 (GDEGKGK) and 40–42 (GHT). D13 functions as the Proton acceptor in the catalytic mechanism. D13 and G40 together coordinate Mg(2+). IMP contacts are provided by residues 13 to 16 (DEGK), 38 to 41 (NAGH), T128, R142, Q212, T227, and R290. H41 (proton donor) is an active-site residue. A substrate-binding site is contributed by 286-292 (ATTRRPR). GTP-binding positions include R292, 318-320 (KAD), and 390-392 (STG).

Belongs to the adenylosuccinate synthetase family. In terms of assembly, homodimer. Mg(2+) is required as a cofactor.

It localises to the cytoplasm. The enzyme catalyses IMP + L-aspartate + GTP = N(6)-(1,2-dicarboxyethyl)-AMP + GDP + phosphate + 2 H(+). It functions in the pathway purine metabolism; AMP biosynthesis via de novo pathway; AMP from IMP: step 1/2. Functionally, plays an important role in the de novo pathway of purine nucleotide biosynthesis. Catalyzes the first committed step in the biosynthesis of AMP from IMP. The polypeptide is Adenylosuccinate synthetase (Pseudothermotoga lettingae (strain ATCC BAA-301 / DSM 14385 / NBRC 107922 / TMO) (Thermotoga lettingae)).